The sequence spans 883 residues: DNA double-strand break repair Rad50 ATPase (883 aa).

ATP contacts are provided by residues Lys-12, 32 to 38, and Gln-137; that span reads NGSGKSS. A coiled-coil region spans residues 244 to 283; that stretch reads ERYEESRTALADVEETIADVREAVAEAERERETLADRVSD. Disordered regions lie at residues 271–290 and 305–326; these read ERERETLADRVSDHRERASD and DDPDAEDASAERDAVADQREAV. Over residues 313 to 326 the composition is skewed to basic and acidic residues; the sequence is SAERDAVADQREAV. Coiled coils occupy residues 336 to 389 and 414 to 452; these read AVSR…IEAL and LDDATAERDELRERVATLRADRQSAADRVAEAEALLDEG. Residues 407–506 form the Zinc-hook domain; it reads FGAAEAFLDD…RVDRGESLVA (100 aa). Zn(2+) contacts are provided by Cys-454 and Cys-457. The segment at 508–565 is disordered; it reads EDRVDDLEQQRERAVERRDEQADIADAKRDQAAEKRDRAADLDAEAEDARADAAAKRD. 2 coiled-coil regions span residues 571-604 and 668-720; these read RETLAALNADQTALKERLDALADLVDRLEAAADA and KLQA…VTAL.

Belongs to the SMC family. RAD50 subfamily. Homodimer. Forms a heterotetramer composed of two Mre11 subunits and two Rad50 subunits. Requires Zn(2+) as cofactor.

In terms of biological role, part of the Rad50/Mre11 complex, which is involved in the early steps of DNA double-strand break (DSB) repair. Rad50 controls the balance between DNA end bridging and DNA resection via ATP-dependent structural rearrangements of the Rad50/Mre11 complex. This Halobacterium salinarum (strain ATCC 700922 / JCM 11081 / NRC-1) (Halobacterium halobium) protein is DNA double-strand break repair Rad50 ATPase.